Consider the following 225-residue polypeptide: NAD(P)H-quinone oxidoreductase subunit K, chloroplastic (225 aa).

[4Fe-4S] cluster is bound by residues Cys43, Cys44, Cys108, and Cys139.

Belongs to the complex I 20 kDa subunit family. NDH is composed of at least 16 different subunits, 5 of which are encoded in the nucleus. It depends on [4Fe-4S] cluster as a cofactor.

It localises to the plastid. The protein localises to the chloroplast thylakoid membrane. It catalyses the reaction a plastoquinone + NADH + (n+1) H(+)(in) = a plastoquinol + NAD(+) + n H(+)(out). The catalysed reaction is a plastoquinone + NADPH + (n+1) H(+)(in) = a plastoquinol + NADP(+) + n H(+)(out). Its function is as follows. NDH shuttles electrons from NAD(P)H:plastoquinone, via FMN and iron-sulfur (Fe-S) centers, to quinones in the photosynthetic chain and possibly in a chloroplast respiratory chain. The immediate electron acceptor for the enzyme in this species is believed to be plastoquinone. Couples the redox reaction to proton translocation, and thus conserves the redox energy in a proton gradient. The protein is NAD(P)H-quinone oxidoreductase subunit K, chloroplastic of Fagopyrum esculentum subsp. ancestrale (Wild buckwheat).